A 586-amino-acid polypeptide reads, in one-letter code: Phosphomethylpyrimidine synthase (586 aa).

The disordered stretch occupies residues 1 to 33 (MKQSVSAEQIELKSSLPGSKKVYVDGPREGMKV). The segment covering 22–33 (VYVDGPREGMKV) has biased composition (basic and acidic residues). Substrate contacts are provided by residues Asn-193, Met-222, Tyr-251, His-287, 307 to 309 (SRG), 348 to 351 (DGLR), and Glu-387. His-391 contributes to the Zn(2+) binding site. Substrate is bound at residue Tyr-414. His-455 provides a ligand contact to Zn(2+). Residues Cys-535, Cys-538, and Cys-543 each coordinate [4Fe-4S] cluster.

Belongs to the ThiC family. [4Fe-4S] cluster is required as a cofactor.

The catalysed reaction is 5-amino-1-(5-phospho-beta-D-ribosyl)imidazole + S-adenosyl-L-methionine = 4-amino-2-methyl-5-(phosphooxymethyl)pyrimidine + CO + 5'-deoxyadenosine + formate + L-methionine + 3 H(+). Its pathway is cofactor biosynthesis; thiamine diphosphate biosynthesis. Catalyzes the synthesis of the hydroxymethylpyrimidine phosphate (HMP-P) moiety of thiamine from aminoimidazole ribotide (AIR) in a radical S-adenosyl-L-methionine (SAM)-dependent reaction. The sequence is that of Phosphomethylpyrimidine synthase from Bacillus cereus (strain B4264).